The sequence spans 345 residues: MARQINDTFLRACRGEQTSYVPVWYMRQAGRSQPEYRALKEKYSLFEITHQPELCAYVTRLPVEQYGVDAAILYKDIMTPLPAIGVNVEIQGGIGPVIANPIRSLQDVERLGEIDPEHDVPYVFETIRLLVNEQLDVPLIGFAGAPFTLASYMIEGGPSKNYHKTKAFMYAEPKAWFALMDKLAEMTIRYVRAQIRAGASAVQIFDSWVGAVSADDYRTFIKPAMARIFAALREEGAPLIMFGVGASHLVHEWNDLPLDVIGLDWRLSIREARRQGIAKAIQGNLDPAVLLAPWDVIEERVKRILDEGMERPGYIFNLGHGIFPDVQPATLKRLTAFIHEYTSTN.

Substrate contacts are provided by residues 27–31 (RQAGR), Phe46, Asp76, Tyr152, Ser207, and His320.

This sequence belongs to the uroporphyrinogen decarboxylase family. Homodimer.

The protein resides in the cytoplasm. The enzyme catalyses uroporphyrinogen III + 4 H(+) = coproporphyrinogen III + 4 CO2. Its pathway is porphyrin-containing compound metabolism; protoporphyrin-IX biosynthesis; coproporphyrinogen-III from 5-aminolevulinate: step 4/4. Catalyzes the decarboxylation of four acetate groups of uroporphyrinogen-III to yield coproporphyrinogen-III. In Geobacillus kaustophilus (strain HTA426), this protein is Uroporphyrinogen decarboxylase.